Here is a 449-residue protein sequence, read N- to C-terminus: NMPEHAGASLASQLKLDAHWMPYTANRNFLRDPRLIVAAEGSWLVDDKGRKVYDSLSGLWTCGAGHTRKEIQEAVAKQLSTLDYSPGFQYGHPLSFQLAEKITDLTPGNLNHVFFTDSGSECALTAVKMVRAYWRLKGQATKTKMIGRARGYHGVNIAGTSLGGVNGNRKLFGQPMQDVDHLPHTLLASNAYSRGMPKEGGIALADELLKLIELHDASNIAAVFVEPLAGSAGVLVPPEGYLKRNREICNQHNILLVFDEVITGFGRTGSMFGADSFGVTPDLMCIAKQVTNGAIPMGAVIASTEIYQTFMNQPTPEYAVEFPHGYTYSAHPVACAAGLAALCLLQKENLVQSVAEVAPHFEKALHGIKGAKNVIDIRNFGLAGAIQIAPRDGDAIVRPFEAGMALWKAGFYVRFGGDTLQFGPTFNSKPQDLDRLFDAVGEVLNKLLD.

Trp60 contacts substrate. Pyridoxal 5'-phosphate is bound at residue 119-120 (GS). Lys288 is subject to N6-(pyridoxal phosphate)lysine. Pyridoxal 5'-phosphate is bound at residue Thr327. Substrate contacts are provided by Arg414 and Gln421.

Belongs to the class-III pyridoxal-phosphate-dependent aminotransferase family. In terms of assembly, homotetramer. The cofactor is pyridoxal 5'-phosphate.

It catalyses the reaction 3-oxopropanoate + L-alanine = beta-alanine + pyruvate. Its function is as follows. Catalyzes transamination between a variety of omega-amino acids, mono and diamines, and pyruvate. Plays a pivotal role in the metabolism of the omega amino acids. The sequence is that of Omega-amino acid--pyruvate aminotransferase from Pseudomonas putida (Arthrobacter siderocapsulatus).